We begin with the raw amino-acid sequence, 361 residues long: Phosphoserine aminotransferase (361 aa).

R43 contacts L-glutamate. Pyridoxal 5'-phosphate-binding positions include 77-78 (AS), W103, T153, D173, and Q196. K197 carries the post-translational modification N6-(pyridoxal phosphate)lysine. Position 238–239 (238–239 (NT)) interacts with pyridoxal 5'-phosphate.

Belongs to the class-V pyridoxal-phosphate-dependent aminotransferase family. SerC subfamily. As to quaternary structure, homodimer. It depends on pyridoxal 5'-phosphate as a cofactor.

It is found in the cytoplasm. It catalyses the reaction O-phospho-L-serine + 2-oxoglutarate = 3-phosphooxypyruvate + L-glutamate. It carries out the reaction 4-(phosphooxy)-L-threonine + 2-oxoglutarate = (R)-3-hydroxy-2-oxo-4-phosphooxybutanoate + L-glutamate. The protein operates within amino-acid biosynthesis; L-serine biosynthesis; L-serine from 3-phospho-D-glycerate: step 2/3. It participates in cofactor biosynthesis; pyridoxine 5'-phosphate biosynthesis; pyridoxine 5'-phosphate from D-erythrose 4-phosphate: step 3/5. In terms of biological role, catalyzes the reversible conversion of 3-phosphohydroxypyruvate to phosphoserine and of 3-hydroxy-2-oxo-4-phosphonooxybutanoate to phosphohydroxythreonine. The chain is Phosphoserine aminotransferase from Pseudomonas aeruginosa (strain ATCC 15692 / DSM 22644 / CIP 104116 / JCM 14847 / LMG 12228 / 1C / PRS 101 / PAO1).